A 311-amino-acid polypeptide reads, in one-letter code: Protease HtpX homolog 1 (311 aa).

2 helical membrane passes run 12–32 (IIAL…IINF) and 35–55 (FPVI…WLIS). H137 provides a ligand contact to Zn(2+). E138 is an active-site residue. H141 lines the Zn(2+) pocket. 2 consecutive transmembrane segments (helical) span residues 159-179 (ILGF…IFAV) and 184-204 (ILVG…TFFL). E216 provides a ligand contact to Zn(2+).

Belongs to the peptidase M48B family. It depends on Zn(2+) as a cofactor.

Its subcellular location is the cell membrane. This is Protease HtpX homolog 1 from Sulfurisphaera tokodaii (strain DSM 16993 / JCM 10545 / NBRC 100140 / 7) (Sulfolobus tokodaii).